The following is a 336-amino-acid chain: Foldase protein PrsA (336 aa).

The N-terminal stretch at 1–22 is a signal peptide; that stretch reads MKSAKKLLSVLCLGIFILTFTA. Residue C23 is the site of N-palmitoyl cysteine attachment. Residue C23 is the site of S-diacylglycerol cysteine attachment. Residues 194–286 form the PpiC domain; sequence PNTMNVSHIL…FGYHIIKINS (93 aa).

It belongs to the PrsA family.

It is found in the cell membrane. The catalysed reaction is [protein]-peptidylproline (omega=180) = [protein]-peptidylproline (omega=0). Its function is as follows. Plays a major role in protein secretion by helping the post-translocational extracellular folding of several secreted proteins. The chain is Foldase protein PrsA from Clostridium botulinum (strain 657 / Type Ba4).